An 87-amino-acid polypeptide reads, in one-letter code: Phytosulfokines 1 (87 aa).

The signal sequence occupies residues 1–24 (MMKTKSEVLIFFFTLVLLLSMASS). Residues 25–76 (VILREDGFAPPKPSPTTHEKASTKGDRDGVECKNSDSEEECLVKKTVAAHTD) constitute a propeptide that is removed on maturation. Positions 31 to 59 (GFAPPKPSPTTHEKASTKGDRDGVECKNS) are disordered. The span at 41–59 (THEKASTKGDRDGVECKNS) shows a compositional bias: basic and acidic residues. A sulfotyrosine mark is found at Tyr77 and Tyr79. Residues 82-87 (DLNLSP) constitute a propeptide that is removed on maturation.

It belongs to the phytosulfokine family. In terms of processing, sulfation is important for activity and for the binding to a putative membrane receptor. PSK-beta is produced from PSK-alpha by exopeptidase digestion. As to expression, expressed only in roots.

It is found in the secreted. Promotes plant cell differentiation, organogenesis and somatic embryogenesis as well as cell proliferation. In Arabidopsis thaliana (Mouse-ear cress), this protein is Phytosulfokines 1 (PSK1).